We begin with the raw amino-acid sequence, 65 residues long: Metallothionein-like protein type 3 (65 aa).

It belongs to the metallothionein superfamily. Type 15 family.

Functionally, metallothioneins have a high content of cysteine residues that bind various heavy metals. This is Metallothionein-like protein type 3 from Carica papaya (Papaya).